The chain runs to 427 residues: Mannosylglucosylglycerate synthase (427 aa).

It belongs to the glycosyltransferase group 1 family. It depends on Co(2+) as a cofactor. Mg(2+) is required as a cofactor. The cofactor is Mn(2+). Ni(2+) serves as cofactor.

The catalysed reaction is (2R)-2-O-(alpha-D-glucopyranosyl)-glycerate + GDP-alpha-D-mannose = (2R)-2-O-[alpha-D-mannopyranosyl-(1-&gt;2)-alpha-D-glucopyranosyl]-glycerate + GDP + H(+). Its function is as follows. Catalyzes the synthesis of mannosylglucosylglycerate (MGG) from glucosylglycerate (GG) and GDP-mannose. This Thermotoga maritima (strain ATCC 43589 / DSM 3109 / JCM 10099 / NBRC 100826 / MSB8) protein is Mannosylglucosylglycerate synthase.